Here is a 443-residue protein sequence, read N- to C-terminus: Xaa-Pro dipeptidase (443 aa).

5 residues coordinate Mn(2+): aspartate 246, aspartate 257, histidine 339, glutamate 384, and glutamate 423.

The protein belongs to the peptidase M24B family. Bacterial-type prolidase subfamily. The cofactor is Mn(2+).

The enzyme catalyses Xaa-L-Pro dipeptide + H2O = an L-alpha-amino acid + L-proline. Functionally, splits dipeptides with a prolyl residue in the C-terminal position. The protein is Xaa-Pro dipeptidase of Shigella flexneri.